The sequence spans 1391 residues: DNA-directed RNA polymerase subunit beta (1391 aa).

The protein belongs to the RNA polymerase beta chain family. In terms of assembly, the RNAP catalytic core consists of 2 alpha, 1 beta, 1 beta' and 1 omega subunit. When a sigma factor is associated with the core the holoenzyme is formed, which can initiate transcription.

It carries out the reaction RNA(n) + a ribonucleoside 5'-triphosphate = RNA(n+1) + diphosphate. Functionally, DNA-dependent RNA polymerase catalyzes the transcription of DNA into RNA using the four ribonucleoside triphosphates as substrates. The chain is DNA-directed RNA polymerase subunit beta from Granulibacter bethesdensis (strain ATCC BAA-1260 / CGDNIH1).